Here is a 181-residue protein sequence, read N- to C-terminus: Bradykinin potentiating and C-type natriuretic peptides (181 aa).

Positions 1–23 are cleaved as a signal peptide; that stretch reads MFVSRLAASGLLLLALLAVSLDG. Positions 24-27 are excised as a propeptide; the sequence is KPLQ. Q28 and Q31 each carry pyrrolidone carboxylic acid. A propeptide spanning residues 41–43 is cleaved from the precursor; sequence LVV. Q44 is subject to Pyrrolidone carboxylic acid. Residues 50-52 constitute a propeptide that is removed on maturation; that stretch reads TQL. Q53 is modified (pyrrolidone carboxylic acid). A propeptide spanning residues 59–159 is cleaved from the precursor; the sequence is AGGTTALREE…ARRLKGLAKK (101 aa). Residues 74 to 150 are disordered; it reads EAALDTPPAG…GGGCGGGGGA (77 aa). Positions 104–114 are enriched in low complexity; the sequence is SKGASATSAAS. Residues 140 to 150 are compositionally biased toward gly residues; that stretch reads AGGGCGGGGGA. C165 and C181 form a disulfide bridge.

The protein in the N-terminal section; belongs to the bradykinin-potentiating peptide family. In the C-terminal section; belongs to the natriuretic peptide family. In terms of tissue distribution, venom gland.

Its subcellular location is the secreted. In terms of biological role, bradykinin-potentiating peptide both inhibits the activity of the angiotensin-converting enzyme (ACE) and enhances the action of bradykinin by inhibiting the peptidases that inactivate it. It acts as an indirect hypotensive agent. Synthetic Cdt1a, Cdt1b and the short hexapeptide Cdt3 are able to potentiate the hypotensive effect mediated by Bk on the blood pressure of anesthetized rats. Has a vasorelaxant activity in rat aortic strips and a diuretic potency in anesthetized rats. May act by activating natriuretic receptors (NPR1 and/or NPR2). The protein is Bradykinin potentiating and C-type natriuretic peptides of Crotalus durissus terrificus (South American rattlesnake).